Reading from the N-terminus, the 128-residue chain is MANTPEDTQNTQNDSQNDSQNDSQKDTSARATSARAHQQPQEQPPSPMRVLRGACAQLAELTGMEAESVSSFERTEDGWTLNVEVLELARVPDTMSLLASYEVELDAHGELSGYRRVRRYERGRSDRS.

The disordered stretch occupies residues 1–49 (MANTPEDTQNTQNDSQNDSQNDSQKDTSARATSARAHQQPQEQPPSPMR). A compositionally biased stretch (low complexity) spans 7–22 (DTQNTQNDSQNDSQND). The segment covering 29 to 41 (ARATSARAHQQPQ) has biased composition (polar residues).

This sequence belongs to the gas vesicle GvpO family.

Its subcellular location is the gas vesicle. In terms of biological role, a minor component of the gas vesicle. May play a role in transcription and/or RNA stability and in GV assembly. Gas vesicles are hollow, gas filled proteinaceous nanostructures found in some microorganisms. It is not clear what function gas vesicles perform in soil bacteria. This is Gas vesicle protein O from Streptomyces sp. (strain CB03234).